A 109-amino-acid polypeptide reads, in one-letter code: Phosphoribosyl-ATP pyrophosphatase (109 aa).

The protein belongs to the PRA-PH family.

It is found in the cytoplasm. The catalysed reaction is 1-(5-phospho-beta-D-ribosyl)-ATP + H2O = 1-(5-phospho-beta-D-ribosyl)-5'-AMP + diphosphate + H(+). Its pathway is amino-acid biosynthesis; L-histidine biosynthesis; L-histidine from 5-phospho-alpha-D-ribose 1-diphosphate: step 2/9. The polypeptide is Phosphoribosyl-ATP pyrophosphatase (Parvibaculum lavamentivorans (strain DS-1 / DSM 13023 / NCIMB 13966)).